We begin with the raw amino-acid sequence, 375 residues long: Anhydro-N-acetylmuramic acid kinase (375 aa).

13-20 (GTSMDGVD) lines the ATP pocket.

This sequence belongs to the anhydro-N-acetylmuramic acid kinase family.

The enzyme catalyses 1,6-anhydro-N-acetyl-beta-muramate + ATP + H2O = N-acetyl-D-muramate 6-phosphate + ADP + H(+). It participates in amino-sugar metabolism; 1,6-anhydro-N-acetylmuramate degradation. The protein operates within cell wall biogenesis; peptidoglycan recycling. Functionally, catalyzes the specific phosphorylation of 1,6-anhydro-N-acetylmuramic acid (anhMurNAc) with the simultaneous cleavage of the 1,6-anhydro ring, generating MurNAc-6-P. Is required for the utilization of anhMurNAc either imported from the medium or derived from its own cell wall murein, and thus plays a role in cell wall recycling. The sequence is that of Anhydro-N-acetylmuramic acid kinase from Pelagibacter ubique (strain HTCC1062).